Reading from the N-terminus, the 336-residue chain is 4-hydroxy-3-methylbut-2-enyl diphosphate reductase (336 aa).

Residue Cys-37 coordinates [4Fe-4S] cluster. 2 residues coordinate (2E)-4-hydroxy-3-methylbut-2-enyl diphosphate: His-66 and His-99. Residues His-66 and His-99 each coordinate dimethylallyl diphosphate. Isopentenyl diphosphate-binding residues include His-66 and His-99. Residue Cys-121 participates in [4Fe-4S] cluster binding. His-149 is a binding site for (2E)-4-hydroxy-3-methylbut-2-enyl diphosphate. His-149 contributes to the dimethylallyl diphosphate binding site. Residue His-149 coordinates isopentenyl diphosphate. Glu-151 functions as the Proton donor in the catalytic mechanism. Thr-189 serves as a coordination point for (2E)-4-hydroxy-3-methylbut-2-enyl diphosphate. Cys-219 contacts [4Fe-4S] cluster. (2E)-4-hydroxy-3-methylbut-2-enyl diphosphate contacts are provided by Ser-247, Ser-248, Asn-249, and Ser-292. Positions 247, 248, 249, and 292 each coordinate dimethylallyl diphosphate. The isopentenyl diphosphate site is built by Ser-247, Ser-248, Asn-249, and Ser-292.

This sequence belongs to the IspH family. [4Fe-4S] cluster serves as cofactor.

It carries out the reaction isopentenyl diphosphate + 2 oxidized [2Fe-2S]-[ferredoxin] + H2O = (2E)-4-hydroxy-3-methylbut-2-enyl diphosphate + 2 reduced [2Fe-2S]-[ferredoxin] + 2 H(+). The catalysed reaction is dimethylallyl diphosphate + 2 oxidized [2Fe-2S]-[ferredoxin] + H2O = (2E)-4-hydroxy-3-methylbut-2-enyl diphosphate + 2 reduced [2Fe-2S]-[ferredoxin] + 2 H(+). It functions in the pathway isoprenoid biosynthesis; dimethylallyl diphosphate biosynthesis; dimethylallyl diphosphate from (2E)-4-hydroxy-3-methylbutenyl diphosphate: step 1/1. It participates in isoprenoid biosynthesis; isopentenyl diphosphate biosynthesis via DXP pathway; isopentenyl diphosphate from 1-deoxy-D-xylulose 5-phosphate: step 6/6. Catalyzes the conversion of 1-hydroxy-2-methyl-2-(E)-butenyl 4-diphosphate (HMBPP) into a mixture of isopentenyl diphosphate (IPP) and dimethylallyl diphosphate (DMAPP). Acts in the terminal step of the DOXP/MEP pathway for isoprenoid precursor biosynthesis. This is 4-hydroxy-3-methylbut-2-enyl diphosphate reductase from Nocardia farcinica (strain IFM 10152).